The chain runs to 312 residues: Ubiquinone biosynthesis O-methyltransferase, mitochondrial (312 aa).

Residues Met1–Lys32 constitute a mitochondrion transit peptide. Residues Arg68, Gly130, Asp153, and Met196 each contribute to the S-adenosyl-L-methionine site. 3 residues coordinate Mg(2+): Glu197, Glu200, and His201.

It belongs to the class I-like SAM-binding methyltransferase superfamily. UbiG/COQ3 family. Component of a multi-subunit COQ enzyme complex, composed of at least COQ3, COQ4, COQ5, COQ6, COQ7 and COQ9. Interacts directly with COQ4. Mg(2+) serves as cofactor.

The protein resides in the mitochondrion inner membrane. The catalysed reaction is 3,4-dihydroxy-5-(all-trans-hexaprenyl)benzoate + S-adenosyl-L-methionine = 4-hydroxy-3-methoxy-5-(all-trans-hexaprenyl)benzoate + S-adenosyl-L-homocysteine + H(+). It carries out the reaction a 3-demethylubiquinone + S-adenosyl-L-methionine = a ubiquinone + S-adenosyl-L-homocysteine. The enzyme catalyses 3-demethylubiquinol-6 + S-adenosyl-L-methionine = ubiquinol-6 + S-adenosyl-L-homocysteine + H(+). The protein operates within cofactor biosynthesis; ubiquinone biosynthesis. Regulated in response to catabolite repression. Functionally, O-methyltransferase required for two non-consecutive steps during ubiquinone biosynthesis. Catalyzes the 2 O-methylation of 3,4-dihydroxy-5-(all-trans-hexaprenyl)benzoic acid into 4-hydroxy-3-methoxy-5-(all-trans-hexaprenyl)benzoic acid. Also catalyzes the last step of ubiquinone biosynthesis by mediating methylation of 3-demethylubiquinone into ubiquinone. Also able to mediate the methylation of 3-demethylubiquinol-6 into ubiquinol-6. This chain is Ubiquinone biosynthesis O-methyltransferase, mitochondrial, found in Saccharomyces cerevisiae (strain ATCC 204508 / S288c) (Baker's yeast).